The chain runs to 208 residues: Ribosome maturation factor RimP (208 aa).

The interval 165 to 208 (TAQPKKGQRQGKEPAKESGQKKQLAEAAPRSGSKRSERGSEKRK) is disordered. Basic and acidic residues-rich tracts occupy residues 174–188 (QGKEPAKESGQKKQL) and 198–208 (KRSERGSEKRK).

Belongs to the RimP family.

Its subcellular location is the cytoplasm. In terms of biological role, required for maturation of 30S ribosomal subunits. The sequence is that of Ribosome maturation factor RimP from Sorangium cellulosum (strain So ce56) (Polyangium cellulosum (strain So ce56)).